The sequence spans 456 residues: FAD-dependent monooxygenase sor5 (456 aa).

Residues 18-38 (PLEVAIVGGGLTGLALALGLL) form a helical membrane-spanning segment. N43 carries an N-linked (GlcNAc...) asparagine glycan. FAD is bound by residues E48 and R119. The active site involves R200. D331 and A344 together coordinate FAD.

This sequence belongs to the paxM FAD-dependent monooxygenase family. FAD serves as cofactor.

It is found in the membrane. Its pathway is secondary metabolite biosynthesis. Its function is as follows. FAD-dependent monooxygenase; part of the SOR gene cluster that mediates the biosynthesis of sorbicillinoids, a diverse group of yellow secondary metabolites that restrict growth of competing pathogenic fungi but not of bacteria. Sorbicillinoids biosynthesis requires the action of two PKSs. The SOR cluster is required for the production of trichodimerol and dihydrotrichotetronin, with sor2 being sufficient for production of trichodimerol, but not dihydrotrichotetronin in the light. Sor1 iteratively combines three acetyl units and the growing chain is modified by the ketoacyl reductase subunit, and optional by the enoyl reductase subunit in the second cycle. The polyketide is then handed over to the PKS sor2, which adds three more acetyl units, and two methyl groups. Sor2 releases an aldehyde, which undergoes spontaneous cyclization resulting in the formation of sorbicillin or 2',3'-dihydrosorbicillin. The monooxygenase sor5 oxidizes sorbicillin and 2',3'-dihydrosorbicillin to 2',3'-dihydrosorbicillinol and sorbicillinol, respectively. The oxidoreductase sor8 further converts sorbicillinol into oxosorbicillinol. Sorbicillinol is the building block for the other sorbicillinoids such as disorbicillinol, bisvertinolon, dihydrobisvertinolone, and dihydrotrichotetronine. This chain is FAD-dependent monooxygenase sor5, found in Hypocrea jecorina (strain QM6a) (Trichoderma reesei).